Consider the following 223-residue polypeptide: Killer cell lectin-like receptor subfamily B member 1A (223 aa).

The Cytoplasmic segment spans residues 1 to 43; it reads MDTARVYLSLKPSKTAAGAQCVSPPSLPPDACRCPRSHRLALK. The short motif at 32 to 35 is the LCK-binding motif element; the sequence is CRCP. The helical; Signal-anchor for type II membrane protein transmembrane segment at 44–63 threads the bilayer; that stretch reads LSCAGLILLVLALVGMSILV. Residues 64 to 223 are Extracellular-facing; it reads RVLVQKPSVE…LKCECMCNDS (160 aa). Residues 93–212 enclose the C-type lectin domain; sequence KCPKDWLSHR…DSDNIWVCQK (120 aa). Cystine bridges form between C94–C105, C122–C210, and C189–C202.

In terms of assembly, homodimer; disulfide-linked. Interacts with tyrosine kinase LCK. Expressed in natural killer cells.

The protein resides in the membrane. In terms of biological role, plays a stimulatory role on natural killer (NK) cell cytotoxicity. In Rattus norvegicus (Rat), this protein is Killer cell lectin-like receptor subfamily B member 1A (Klrb1a).